The sequence spans 205 residues: Small ribosomal subunit protein uS4 (205 aa).

The interval 18 to 46 is disordered; the sequence is NIWGRSKSPVNRREYGPGQHGQRRKGKLS. The S4 RNA-binding domain occupies 94-157; sequence RRLDAVVYRA…RQMTLVLEAQ (64 aa).

It belongs to the universal ribosomal protein uS4 family. Part of the 30S ribosomal subunit. Contacts protein S5. The interaction surface between S4 and S5 is involved in control of translational fidelity.

Its function is as follows. One of the primary rRNA binding proteins, it binds directly to 16S rRNA where it nucleates assembly of the body of the 30S subunit. With S5 and S12 plays an important role in translational accuracy. In Xanthobacter autotrophicus (strain ATCC BAA-1158 / Py2), this protein is Small ribosomal subunit protein uS4.